The sequence spans 313 residues: Thiamine thiazole synthase (313 aa).

Residues alanine 71, glutamate 92–alanine 93, glycine 100, and valine 165 each bind substrate. Cysteine 199 is subject to 2,3-didehydroalanine (Cys). Substrate-binding positions include aspartate 201, histidine 216, methionine 268, and arginine 278–glycine 280.

This sequence belongs to the THI4 family. As to quaternary structure, homooctamer. Requires Fe cation as cofactor. In terms of processing, during the catalytic reaction, a sulfide is transferred from Cys-199 to a reaction intermediate, generating a dehydroalanine residue.

It localises to the cytoplasm. Its subcellular location is the nucleus. The catalysed reaction is [ADP-thiazole synthase]-L-cysteine + glycine + NAD(+) = [ADP-thiazole synthase]-dehydroalanine + ADP-5-ethyl-4-methylthiazole-2-carboxylate + nicotinamide + 3 H2O + 2 H(+). Involved in biosynthesis of the thiamine precursor thiazole. Catalyzes the conversion of NAD and glycine to adenosine diphosphate 5-(2-hydroxyethyl)-4-methylthiazole-2-carboxylic acid (ADT), an adenylated thiazole intermediate. The reaction includes an iron-dependent sulfide transfer from a conserved cysteine residue of the protein to a thiazole intermediate. The enzyme can only undergo a single turnover, which suggests it is a suicide enzyme. May have additional roles in adaptation to various stress conditions and in DNA damage tolerance. This chain is Thiamine thiazole synthase, found in Coprinopsis cinerea (strain Okayama-7 / 130 / ATCC MYA-4618 / FGSC 9003) (Inky cap fungus).